The sequence spans 317 residues: Fe-S cluster assembly protein dre2 (317 aa).

The segment at 22-152 is N-terminal SAM-like domain; it reads PVQAKRTLLL…KPNFEPSAAV (131 aa). Positions 153 to 209 are linker; that stretch reads PLKFGLKKKNKPTPTAVPSIPTGFAAPMGIDSPVTNHDRDEDDELINEDTLLSEEDL. Residues Cys219, Cys230, Cys233, and Cys235 each coordinate [2Fe-2S] cluster. Positions 219–235 are fe-S binding site A; the sequence is CQPKTGRRRRACKDCTC. 4 residues coordinate [4Fe-4S] cluster: Cys280, Cys283, Cys291, and Cys294. Short sequence motifs (cx2C motif) lie at residues 280–283 and 291–294; these read CGSC and CDGC. A fe-S binding site B region spans residues 280–294; it reads CGSCALGDAFRCDGC.

Belongs to the anamorsin family. In terms of assembly, monomer. Interacts with tah18. Interacts with mia40. [2Fe-2S] cluster serves as cofactor. Requires [4Fe-4S] cluster as cofactor.

It is found in the cytoplasm. Its subcellular location is the mitochondrion intermembrane space. In terms of biological role, component of the cytosolic iron-sulfur (Fe-S) protein assembly (CIA) machinery required for the maturation of extramitochondrial Fe-S proteins. Part of an electron transfer chain functioning in an early step of cytosolic Fe-S biogenesis, facilitating the de novo assembly of a [4Fe-4S] cluster on the scaffold complex cfd1-nbp35. Electrons are transferred to dre2 from NADPH via the FAD- and FMN-containing protein tah18. Tah18-dre2 are also required for the assembly of the diferric tyrosyl radical cofactor of ribonucleotide reductase (RNR), probably by providing electrons for reduction during radical cofactor maturation in the catalytic small subunit rnr2. In Penicillium rubens (strain ATCC 28089 / DSM 1075 / NRRL 1951 / Wisconsin 54-1255) (Penicillium chrysogenum), this protein is Fe-S cluster assembly protein dre2.